The chain runs to 1082 residues: Putative white-brown complex homolog protein 30 (1082 aa).

2 helical membrane passes run 12–32 (HIFL…SLDG) and 292–312 (NIHA…IMVY). Residues 329–348 (SREAAARHAKETTQARERWK) show a composition bias toward basic and acidic residues. The segment at 329–437 (SREAAARHAK…QAPKGKQLHT (109 aa)) is disordered. Positions 484–726 (VAFKDLTLTL…FADIGITVPD (243 aa)) constitute an ABC transporter domain. 518–525 (GPSGAGKT) contacts ATP. Residues 832-1029 (RQYRYFVGRV…TLEAFVLSNA (198 aa)) enclose the ABC transmembrane type-2 domain. 5 helical membrane-spanning segments follow: residues 853–873 (ALDF…AKVN), 877–897 (IDTL…KISA), 958–978 (YIVL…FAIL), 979–999 (YSPS…TLIA), and 1054–1074 (WILC…IAYF).

This sequence belongs to the ABC transporter superfamily. ABCG family. Eye pigment precursor importer (TC 3.A.1.204) subfamily.

It localises to the membrane. The polypeptide is Putative white-brown complex homolog protein 30 (WBC30) (Arabidopsis thaliana (Mouse-ear cress)).